The primary structure comprises 343 residues: Methionine import ATP-binding protein MetN (343 aa).

The region spanning 2–241 (IKLSNITKVF…PKTPLAQKFI (240 aa)) is the ABC transporter domain. Residue 38–45 (GASGAGKS) coordinates ATP.

Belongs to the ABC transporter superfamily. Methionine importer (TC 3.A.1.24) family. The complex is composed of two ATP-binding proteins (MetN), two transmembrane proteins (MetI) and a solute-binding protein (MetQ).

The protein resides in the cell inner membrane. It catalyses the reaction L-methionine(out) + ATP + H2O = L-methionine(in) + ADP + phosphate + H(+). It carries out the reaction D-methionine(out) + ATP + H2O = D-methionine(in) + ADP + phosphate + H(+). In terms of biological role, part of the ABC transporter complex MetNIQ involved in methionine import. Responsible for energy coupling to the transport system. This is Methionine import ATP-binding protein MetN from Escherichia coli O6:K15:H31 (strain 536 / UPEC).